A 471-amino-acid chain; its full sequence is Cysteine--tRNA ligase (471 aa).

Cys29 serves as a coordination point for Zn(2+). The 'HIGH' region motif lies at 31–41 (PTVYDYFHIGN). Residues Cys212, His237, and Glu241 each coordinate Zn(2+). A 'KMSKS' region motif is present at residues 269 to 273 (KMSKS). Residue Lys272 coordinates ATP.

It belongs to the class-I aminoacyl-tRNA synthetase family. In terms of assembly, monomer. The cofactor is Zn(2+).

Its subcellular location is the cytoplasm. It catalyses the reaction tRNA(Cys) + L-cysteine + ATP = L-cysteinyl-tRNA(Cys) + AMP + diphosphate. This is Cysteine--tRNA ligase from Symbiobacterium thermophilum (strain DSM 24528 / JCM 14929 / IAM 14863 / T).